A 580-amino-acid polypeptide reads, in one-letter code: 2-succinyl-5-enolpyruvyl-6-hydroxy-3-cyclohexene-1-carboxylate synthase (580 aa).

This sequence belongs to the TPP enzyme family. MenD subfamily. As to quaternary structure, homodimer. It depends on Mg(2+) as a cofactor. Mn(2+) is required as a cofactor. Requires thiamine diphosphate as cofactor.

It catalyses the reaction isochorismate + 2-oxoglutarate + H(+) = 5-enolpyruvoyl-6-hydroxy-2-succinyl-cyclohex-3-ene-1-carboxylate + CO2. The protein operates within quinol/quinone metabolism; 1,4-dihydroxy-2-naphthoate biosynthesis; 1,4-dihydroxy-2-naphthoate from chorismate: step 2/7. Its pathway is quinol/quinone metabolism; menaquinone biosynthesis. Catalyzes the thiamine diphosphate-dependent decarboxylation of 2-oxoglutarate and the subsequent addition of the resulting succinic semialdehyde-thiamine pyrophosphate anion to isochorismate to yield 2-succinyl-5-enolpyruvyl-6-hydroxy-3-cyclohexene-1-carboxylate (SEPHCHC). The polypeptide is 2-succinyl-5-enolpyruvyl-6-hydroxy-3-cyclohexene-1-carboxylate synthase (Bacillus pumilus (strain SAFR-032)).